Here is a 206-residue protein sequence, read N- to C-terminus: FMN-dependent NADH:quinone oxidoreductase (206 aa).

Residues Ser-9, 15–17 (SVS), 95–98 (MYNF), and 139–142 (SRGG) each bind FMN.

This sequence belongs to the azoreductase type 1 family. As to quaternary structure, homodimer. FMN serves as cofactor.

It carries out the reaction 2 a quinone + NADH + H(+) = 2 a 1,4-benzosemiquinone + NAD(+). It catalyses the reaction N,N-dimethyl-1,4-phenylenediamine + anthranilate + 2 NAD(+) = 2-(4-dimethylaminophenyl)diazenylbenzoate + 2 NADH + 2 H(+). Its function is as follows. Quinone reductase that provides resistance to thiol-specific stress caused by electrophilic quinones. Functionally, also exhibits azoreductase activity. Catalyzes the reductive cleavage of the azo bond in aromatic azo compounds to the corresponding amines. The chain is FMN-dependent NADH:quinone oxidoreductase from Legionella pneumophila subsp. pneumophila (strain Philadelphia 1 / ATCC 33152 / DSM 7513).